Here is a 518-residue protein sequence, read N- to C-terminus: Protein FAM98A (518 aa).

2 disordered regions span residues 297–415 (VLMG…GHSS) and 434–518 (GSGY…HYTS). A compositionally biased stretch (basic and acidic residues) spans 302-311 (VPDRGGRPNE). Gly residues-rich tracts occupy residues 349-364 (GGRGGHEQGGGRGGRG), 383-396 (WTDGGSGGGGGYQD), and 405-415 (QPGGYHGGHSS). Residues 447-459 (RYQDGGHHGDRGG) show a composition bias toward basic and acidic residues. Positions 460-484 (GRGGRGGRGGRGGRAGQGGGWGGRG) are enriched in gly residues. The span at 488–504 (YHQGGQFEQHFQHGGYQ) shows a compositional bias: low complexity. Residues 505–518 (YNHSGFGQGRHYTS) show a composition bias toward polar residues.

It belongs to the FAM98 family. Interacts (via N- and C-terminus) with DDX1. Interacts (via N- and C-terminus) with C14orf166. Interacts with FAM98B. Interacts with PLEKHM1 (via N- and C-terminus). Expressed strongly in colorectal cancer cells. Expressed strongly in colorectal cancer tissues compared to wild-type colon samples (at protein level). Expressed strongly in colorectal cancer tissues compared to wild-type colon samples.

Its function is as follows. Positively stimulates PRMT1-induced protein arginine methylation. Involved in skeletal homeostasis. Positively regulates lysosome peripheral distribution and ruffled border formation in osteoclasts. This is Protein FAM98A from Homo sapiens (Human).